The sequence spans 284 residues: 2,3,4,5-tetrahydropyridine-2,6-dicarboxylate N-succinyltransferase (284 aa).

2 residues coordinate substrate: Arg-111 and Asp-148.

The protein belongs to the transferase hexapeptide repeat family. Homotrimer.

The protein localises to the cytoplasm. It catalyses the reaction (S)-2,3,4,5-tetrahydrodipicolinate + succinyl-CoA + H2O = (S)-2-succinylamino-6-oxoheptanedioate + CoA. It functions in the pathway amino-acid biosynthesis; L-lysine biosynthesis via DAP pathway; LL-2,6-diaminopimelate from (S)-tetrahydrodipicolinate (succinylase route): step 1/3. The polypeptide is 2,3,4,5-tetrahydropyridine-2,6-dicarboxylate N-succinyltransferase (Brucella melitensis biotype 2 (strain ATCC 23457)).